A 399-amino-acid chain; its full sequence is Elongation factor Tu (399 aa).

The tr-type G domain maps to Lys-10–Val-209. The segment at Gly-19–Thr-26 is G1. Gly-19–Thr-26 serves as a coordination point for GTP. Thr-26 is a binding site for Mg(2+). The G2 stretch occupies residues Gly-60–Ala-64. A G3 region spans residues Asp-81–Gly-84. GTP is bound by residues Asp-81 to His-85 and Asn-136 to Asp-139. A G4 region spans residues Asn-136–Asp-139. Residues Ser-174–Leu-176 are G5.

Belongs to the TRAFAC class translation factor GTPase superfamily. Classic translation factor GTPase family. EF-Tu/EF-1A subfamily. Monomer.

The protein resides in the cytoplasm. It carries out the reaction GTP + H2O = GDP + phosphate + H(+). Functionally, GTP hydrolase that promotes the GTP-dependent binding of aminoacyl-tRNA to the A-site of ribosomes during protein biosynthesis. This is Elongation factor Tu from Campylobacter concisus (strain 13826).